The following is a 174-amino-acid chain: MAQDIKNEEVEEVQEEEVVKTAEETTPEKSELDLANERADEFENKYLRAHAEMQNIQRRANEERQNLQRYRSQDLAKAILPSLDNLERALAVEGLTDDVKKGLGMVQESLIHALKEEGIEEIAADGEFDHNYHMAIQTLPADDEHPVDTIAQVFQKGYKLHDRILRPAMVVVYN.

Residues 1–35 are disordered; the sequence is MAQDIKNEEVEEVQEEEVVKTAEETTPEKSELDLA. Over residues 17–35 the composition is skewed to basic and acidic residues; sequence EVVKTAEETTPEKSELDLA.

It belongs to the GrpE family. Homodimer.

Its subcellular location is the cytoplasm. Participates actively in the response to hyperosmotic and heat shock by preventing the aggregation of stress-denatured proteins, in association with DnaK and GrpE. It is the nucleotide exchange factor for DnaK and may function as a thermosensor. Unfolded proteins bind initially to DnaJ; upon interaction with the DnaJ-bound protein, DnaK hydrolyzes its bound ATP, resulting in the formation of a stable complex. GrpE releases ADP from DnaK; ATP binding to DnaK triggers the release of the substrate protein, thus completing the reaction cycle. Several rounds of ATP-dependent interactions between DnaJ, DnaK and GrpE are required for fully efficient folding. The protein is Protein GrpE of Streptococcus pneumoniae serotype 4 (strain ATCC BAA-334 / TIGR4).